We begin with the raw amino-acid sequence, 666 residues long: Galactocerebrosidase (666 aa).

Residues 1–22 form the signal peptide; sequence MIYKLYFAIALCFSLCFDLCIA. Thr91 serves as a coordination point for substrate. A glycan (N-linked (GlcNAc...) asparagine) is linked at Asn125. Trp133 and Asn179 together coordinate substrate. Residue Glu180 is the Proton donor/acceptor of the active site. Residue Glu256 is the Nucleophile of the active site. A disulfide bridge connects residues Cys269 and Cys376. N-linked (GlcNAc...) asparagine glycosylation occurs at Asn361. Arg378 lines the substrate pocket. 4 N-linked (GlcNAc...) asparagine glycosylation sites follow: Asn385, Asn390, Asn500, and Asn540.

The protein belongs to the glycosyl hydrolase 59 family.

It localises to the lysosome. It catalyses the reaction a beta-D-galactosyl-(1&lt;-&gt;1')-N-acylsphing-4-enine + H2O = an N-acylsphing-4-enine + D-galactose. It carries out the reaction beta-D-galactosyl-(1&lt;-&gt;1)-sphing-4-enine + H2O = sphing-4-enine + D-galactose. The enzyme catalyses a D-galactosylceramide + H2O = an N-acyl-sphingoid base + D-galactose. In terms of biological role, hydrolyzes the galactose ester bonds of glycolipids such as galactosylceramide and galactosylsphingosine. The polypeptide is Galactocerebrosidase (Salmo salar (Atlantic salmon)).